We begin with the raw amino-acid sequence, 485 residues long: Glutamyl-tRNA(Gln) amidotransferase subunit A (485 aa).

Active-site charge relay system residues include Lys-79 and Ser-154. Ser-178 serves as the catalytic Acyl-ester intermediate.

This sequence belongs to the amidase family. GatA subfamily. Heterotrimer of A, B and C subunits.

The enzyme catalyses L-glutamyl-tRNA(Gln) + L-glutamine + ATP + H2O = L-glutaminyl-tRNA(Gln) + L-glutamate + ADP + phosphate + H(+). Its function is as follows. Allows the formation of correctly charged Gln-tRNA(Gln) through the transamidation of misacylated Glu-tRNA(Gln) in organisms which lack glutaminyl-tRNA synthetase. The reaction takes place in the presence of glutamine and ATP through an activated gamma-phospho-Glu-tRNA(Gln). The protein is Glutamyl-tRNA(Gln) amidotransferase subunit A of Clostridium novyi (strain NT).